The following is a 413-amino-acid chain: Phosphoglycerate kinase (413 aa).

Residues 19–21 (DLN), R34, 57–60 (HQSK), R114, and R154 each bind substrate. ATP-binding positions include E332 and 358–361 (GGHS).

Belongs to the phosphoglycerate kinase family. In terms of assembly, monomer.

Its subcellular location is the cytoplasm. The catalysed reaction is (2R)-3-phosphoglycerate + ATP = (2R)-3-phospho-glyceroyl phosphate + ADP. Its pathway is carbohydrate degradation; glycolysis; pyruvate from D-glyceraldehyde 3-phosphate: step 2/5. The chain is Phosphoglycerate kinase from Thermococcus sibiricus (strain DSM 12597 / MM 739).